Reading from the N-terminus, the 264-residue chain is AA9 family lytic polysaccharide monooxygenase A (264 aa).

Positions 1–18 (MHFAALAILSSLVASAAA) are cleaved as a signal peptide. His-19 serves as a coordination point for Cu(2+). 2 N-linked (GlcNAc...) asparagine glycosylation sites follow: Asn-51 and Asn-75. An intrachain disulfide couples Cys-59 to Cys-182. His-96 provides a ligand contact to Cu(2+). N-linked (GlcNAc...) asparagine glycosylation is present at Asn-110. O2 is bound at residue His-162. Tyr-179 contacts Cu(2+). 2 N-linked (GlcNAc...) asparagine glycosylation sites follow: Asn-218 and Asn-251.

Belongs to the polysaccharide monooxygenase AA9 family. Requires Cu(2+) as cofactor.

Its subcellular location is the secreted. It catalyses the reaction [(1-&gt;4)-beta-D-glucosyl]n+m + reduced acceptor + O2 = 4-dehydro-beta-D-glucosyl-[(1-&gt;4)-beta-D-glucosyl]n-1 + [(1-&gt;4)-beta-D-glucosyl]m + acceptor + H2O.. Its function is as follows. Lytic polysaccharide monooxygenase (LPMO) that depolymerizes crystalline and amorphous polysaccharides via the oxidation of scissile alpha- or beta-(1-4)-glycosidic bonds, yielding C4 oxidation products. Catalysis by LPMOs requires the reduction of the active-site copper from Cu(II) to Cu(I) by a reducing agent and H(2)O(2) or O(2) as a cosubstrate. Active on cellulose and cello-oligosaccharides, as well as plant cell wall-derived hemicellulosic polysaccharides. Also active on cello-oligosaccharides such as cellohexaose, cellopentaose or cellotetraose. This chain is AA9 family lytic polysaccharide monooxygenase A, found in Phanerochaete carnosa (strain HHB-10118-sp) (White-rot fungus).